We begin with the raw amino-acid sequence, 65 residues long: Large ribosomal subunit protein bL35 (65 aa).

The span at 1–16 (MPKQKTHRASAKRFKR) shows a compositional bias: basic residues. Residues 1–20 (MPKQKTHRASAKRFKRTGSG) form a disordered region.

Belongs to the bacterial ribosomal protein bL35 family.

The chain is Large ribosomal subunit protein bL35 from Streptococcus equi subsp. equi (strain 4047).